A 221-amino-acid chain; its full sequence is Endonuclease V (221 aa).

The Mg(2+) site is built by aspartate 38 and aspartate 104.

Belongs to the endonuclease V family. The cofactor is Mg(2+).

The protein resides in the cytoplasm. It catalyses the reaction Endonucleolytic cleavage at apurinic or apyrimidinic sites to products with a 5'-phosphate.. In terms of biological role, DNA repair enzyme involved in the repair of deaminated bases. Selectively cleaves double-stranded DNA at the second phosphodiester bond 3' to a deoxyinosine leaving behind the intact lesion on the nicked DNA. Recognizes only deoxyinosine. This Archaeoglobus fulgidus (strain ATCC 49558 / DSM 4304 / JCM 9628 / NBRC 100126 / VC-16) protein is Endonuclease V.